The following is a 157-amino-acid chain: Transcription elongation factor GreA (157 aa).

Residues 13–75 adopt a coiled-coil conformation; the sequence is RARLEAELEE…EIKSILARAQ (63 aa). Residues 113–142 are disordered; the sequence is EAKPSEGKISNESPIGSALLGKRPRQKVTV.

The protein belongs to the GreA/GreB family.

Functionally, necessary for efficient RNA polymerase transcription elongation past template-encoded arresting sites. The arresting sites in DNA have the property of trapping a certain fraction of elongating RNA polymerases that pass through, resulting in locked ternary complexes. Cleavage of the nascent transcript by cleavage factors such as GreA or GreB allows the resumption of elongation from the new 3'terminus. GreA releases sequences of 2 to 3 nucleotides. This is Transcription elongation factor GreA from Roseiflexus sp. (strain RS-1).